Consider the following 102-residue polypeptide: Ferredoxin-thioredoxin reductase, catalytic chain (102 aa).

Cysteine 53 provides a ligand contact to [4Fe-4S] cluster. The Nucleophile role is filled by cysteine 55. A disulfide bridge connects residues cysteine 55 and cysteine 85. Positions 72, 74, and 83 each coordinate [4Fe-4S] cluster.

The protein belongs to the ferredoxin thioredoxin reductase beta subunit family. Heterodimer of subunit A (variable subunit) and subunit B (catalytic subunit). Heterodimeric FTR forms a complex with ferredoxin and thioredoxin. The cofactor is [4Fe-4S] cluster.

It is found in the plastid. Its subcellular location is the chloroplast. It catalyses the reaction [thioredoxin]-disulfide + 2 reduced [2Fe-2S]-[ferredoxin] + 2 H(+) = [thioredoxin]-dithiol + 2 oxidized [2Fe-2S]-[ferredoxin]. Its function is as follows. Catalytic subunit of the ferredoxin-thioredoxin reductase (FTR), which catalyzes the two-electron reduction of thioredoxins by the electrons provided by reduced ferredoxin. The protein is Ferredoxin-thioredoxin reductase, catalytic chain (ftrB) of Guillardia theta (Cryptophyte).